The chain runs to 348 residues: GMP reductase 2 (348 aa).

Residues 26–27 (SR), lysine 78, 129–131 (DVA), and 180–181 (IG) each bind NADP(+). K(+) is bound by residues glycine 181, glycine 183, and cysteine 186. The active-site Thioimidate intermediate is the cysteine 186. The Proton donor/acceptor role is filled by threonine 188. Position 189 (arginine 189) interacts with K(+). GMP contacts are provided by residues 219-221 (DGG), 242-243 (GG), 268-270 (GMS), and 286-290 (RASEG). NADP(+) contacts are provided by residues methionine 269 and 285–286 (YR). Lysine 291 is modified (N6-acetyllysine). 314-317 (STCT) is an NADP(+) binding site.

This sequence belongs to the IMPDH/GMPR family. GuaC type 1 subfamily. As to quaternary structure, homotetramer.

The enzyme catalyses IMP + NH4(+) + NADP(+) = GMP + NADPH + 2 H(+). In terms of biological role, catalyzes the irreversible NADPH-dependent deamination of GMP to IMP. It functions in the conversion of nucleobase, nucleoside and nucleotide derivatives of G to A nucleotides, and in maintaining the intracellular balance of A and G nucleotides. Plays a role in modulating cellular differentiation. This chain is GMP reductase 2, found in Bos taurus (Bovine).